A 274-amino-acid polypeptide reads, in one-letter code: Thiamine kinase (274 aa).

This sequence belongs to the thiamine kinase family.

It catalyses the reaction thiamine + ATP = thiamine phosphate + ADP + H(+). It participates in cofactor biosynthesis; thiamine diphosphate biosynthesis; thiamine phosphate from thiamine: step 1/1. Catalyzes the ATP-dependent phosphorylation of thiamine to thiamine phosphate. Is involved in thiamine salvage. In Salmonella gallinarum (strain 287/91 / NCTC 13346), this protein is Thiamine kinase.